A 231-amino-acid chain; its full sequence is Lipid A acyltransferase PagP (231 aa).

The N-terminal stretch at methionine 1–serine 23 is a signal peptide. The span at serine 24–asparagine 43 shows a compositional bias: low complexity. The tract at residues serine 24–leucine 59 is disordered. Active-site residues include histidine 100, aspartate 145, and serine 146.

It belongs to the lipid A palmitoyltransferase family. In terms of assembly, homodimer.

It is found in the cell outer membrane. It catalyses the reaction a lipid A + a 1,2-diacyl-sn-glycero-3-phosphocholine = a hepta-acyl lipid A + a 2-acyl-sn-glycero-3-phosphocholine. The catalysed reaction is a lipid IVA + a 1,2-diacyl-sn-glycero-3-phosphocholine = a lipid IVB + a 2-acyl-sn-glycero-3-phosphocholine. It carries out the reaction a lipid IIA + a 1,2-diacyl-sn-glycero-3-phosphocholine = a lipid IIB + a 2-acyl-sn-glycero-3-phosphocholine. Its function is as follows. Transfers a fatty acid residue from the sn-1 position of a phospholipid to the N-linked hydroxyfatty acid chain on the proximal unit of lipid A or its precursors. The chain is Lipid A acyltransferase PagP from Legionella longbeachae serogroup 1 (strain NSW150).